A 290-amino-acid polypeptide reads, in one-letter code: 6-carboxyhexanoate--CoA ligase (290 aa).

Belongs to the BioW family. In terms of assembly, homodimer. It depends on Mg(2+) as a cofactor.

The enzyme catalyses heptanedioate + ATP + CoA = 6-carboxyhexanoyl-CoA + AMP + diphosphate. It functions in the pathway metabolic intermediate metabolism; pimeloyl-CoA biosynthesis; pimeloyl-CoA from pimelate: step 1/1. Its function is as follows. Catalyzes the transformation of pimelate into pimeloyl-CoA with concomitant hydrolysis of ATP to AMP. This chain is 6-carboxyhexanoate--CoA ligase, found in Bacillus amyloliquefaciens (Bacillus velezensis).